The chain runs to 124 residues: Small ribosomal subunit protein uS12 (124 aa).

Disordered stretches follow at residues 9-32 (RKGR…QRRG) and 105-124 (QGVK…KEKS). Basic residues predominate over residues 108-118 (KNRKQARSRYG).

Belongs to the universal ribosomal protein uS12 family. Part of the 30S ribosomal subunit. Contacts proteins S8 and S17. May interact with IF1 in the 30S initiation complex.

Its function is as follows. With S4 and S5 plays an important role in translational accuracy. Interacts with and stabilizes bases of the 16S rRNA that are involved in tRNA selection in the A site and with the mRNA backbone. Located at the interface of the 30S and 50S subunits, it traverses the body of the 30S subunit contacting proteins on the other side and probably holding the rRNA structure together. The combined cluster of proteins S8, S12 and S17 appears to hold together the shoulder and platform of the 30S subunit. The sequence is that of Small ribosomal subunit protein uS12 from Nocardia farcinica (strain IFM 10152).